A 447-amino-acid polypeptide reads, in one-letter code: MKNISLNIDKALGTVSKEQVYAQEAKAMECIATLHNGNGAGNDFLGWLHLPSSITDAELADIENTANVLRSKCEVVVAIGIGGSYLGTKAVVEALNNSFDWLQNDRKNPVMLYAGHNIGEDYLYELSEVLKGKQFGIINISKSGTTTEPALAFRILKKQLEDAVGKEEAKHRIVAITDAKRGALRTLADQEGYKTFIIPDNVGGRFSVLTPVGLLPIAVAGISIRDLVAGAVSMEKATDASVPFADNMAAIYAATRNELYKNGKKIEILANFHPKLHYIAEWWKQLYGESEGKDGKGIFPASVDLTTDLHSMGQWIQDGERTIFETVISVEATDHSVLVPTDEADLDGLNFLAGKHVDEVNKMAELGTQLAHVDGGVPNIKVNMPEVSAFYIGQLFYFFEKACGISGYMLGVNPFNQPGVEAYKKNMFALLNKPGYEKESEAIKARL.

Glu-289 acts as the Proton donor in catalysis. Catalysis depends on residues His-310 and Lys-424.

Belongs to the GPI family.

The protein localises to the cytoplasm. The enzyme catalyses alpha-D-glucose 6-phosphate = beta-D-fructose 6-phosphate. It functions in the pathway carbohydrate biosynthesis; gluconeogenesis. It participates in carbohydrate degradation; glycolysis; D-glyceraldehyde 3-phosphate and glycerone phosphate from D-glucose: step 2/4. In terms of biological role, catalyzes the reversible isomerization of glucose-6-phosphate to fructose-6-phosphate. This Parabacteroides distasonis (strain ATCC 8503 / DSM 20701 / CIP 104284 / JCM 5825 / NCTC 11152) protein is Glucose-6-phosphate isomerase.